A 188-amino-acid polypeptide reads, in one-letter code: Pyridoxal 5'-phosphate synthase subunit PdxT (188 aa).

An L-glutamine-binding site is contributed by 47–49; sequence GES. Residue Cys-79 is the Nucleophile of the active site. L-glutamine is bound by residues Arg-105 and 134 to 135; that span reads IR. Residues His-170 and Glu-172 each act as charge relay system in the active site.

The protein belongs to the glutaminase PdxT/SNO family. As to quaternary structure, in the presence of PdxS, forms a dodecamer of heterodimers. Only shows activity in the heterodimer.

It carries out the reaction aldehydo-D-ribose 5-phosphate + D-glyceraldehyde 3-phosphate + L-glutamine = pyridoxal 5'-phosphate + L-glutamate + phosphate + 3 H2O + H(+). It catalyses the reaction L-glutamine + H2O = L-glutamate + NH4(+). Its pathway is cofactor biosynthesis; pyridoxal 5'-phosphate biosynthesis. In terms of biological role, catalyzes the hydrolysis of glutamine to glutamate and ammonia as part of the biosynthesis of pyridoxal 5'-phosphate. The resulting ammonia molecule is channeled to the active site of PdxS. The sequence is that of Pyridoxal 5'-phosphate synthase subunit PdxT from Listeria innocua serovar 6a (strain ATCC BAA-680 / CLIP 11262).